A 208-amino-acid chain; its full sequence is Protein-L-isoaspartate O-methyltransferase (208 aa).

Ser59 is an active-site residue.

The protein belongs to the methyltransferase superfamily. L-isoaspartyl/D-aspartyl protein methyltransferase family.

Its subcellular location is the cytoplasm. The catalysed reaction is [protein]-L-isoaspartate + S-adenosyl-L-methionine = [protein]-L-isoaspartate alpha-methyl ester + S-adenosyl-L-homocysteine. Catalyzes the methyl esterification of L-isoaspartyl residues in peptides and proteins that result from spontaneous decomposition of normal L-aspartyl and L-asparaginyl residues. It plays a role in the repair and/or degradation of damaged proteins. This chain is Protein-L-isoaspartate O-methyltransferase, found in Pectobacterium atrosepticum (strain SCRI 1043 / ATCC BAA-672) (Erwinia carotovora subsp. atroseptica).